The sequence spans 362 residues: NAD(P)H-quinone oxidoreductase subunit 1, chloroplastic (362 aa).

8 consecutive transmembrane segments (helical) span residues Ile29–Leu49, Ile103–Leu123, Ile128–Gly148, Ala164–Leu184, Phe202–Leu222, Tyr247–Ser267, Thr303–Ile323, and Leu335–Thr355.

Belongs to the complex I subunit 1 family. In terms of assembly, NDH is composed of at least 16 different subunits, 5 of which are encoded in the nucleus.

The protein localises to the plastid. Its subcellular location is the chloroplast thylakoid membrane. The catalysed reaction is a plastoquinone + NADH + (n+1) H(+)(in) = a plastoquinol + NAD(+) + n H(+)(out). The enzyme catalyses a plastoquinone + NADPH + (n+1) H(+)(in) = a plastoquinol + NADP(+) + n H(+)(out). NDH shuttles electrons from NAD(P)H:plastoquinone, via FMN and iron-sulfur (Fe-S) centers, to quinones in the photosynthetic chain and possibly in a chloroplast respiratory chain. The immediate electron acceptor for the enzyme in this species is believed to be plastoquinone. Couples the redox reaction to proton translocation, and thus conserves the redox energy in a proton gradient. The protein is NAD(P)H-quinone oxidoreductase subunit 1, chloroplastic of Triticum aestivum (Wheat).